Consider the following 779-residue polypeptide: Abnormal cell migration protein 10 (779 aa).

Residues 78–97 (NELEADTEEDIAETADDEES) are compositionally biased toward acidic residues. 3 disordered regions span residues 78 to 105 (NELEADTEEDIAETADDEESKDPVEKTE), 189 to 217 (SSSRENVKSISTLPPPPPALSYHQTPQQP), and 242 to 302 (AASS…NAEE). A compositionally biased stretch (polar residues) spans 189-200 (SSSRENVKSIST). Positions 242–254 (AASSCSSPDGDSA) are enriched in low complexity. Polar residues predominate over residues 256–293 (GDSSSTESSNNRCRNSAFSSNDSCRDSLNTPSPTQVSP). The 91-residue stretch at 317 to 407 (EAKVTKIFVK…NKLYFMRRPD (91 aa)) folds into the Ras-associating domain. Residues 456 to 566 (PPEMEGFLYL…WLVALRIAKN (111 aa)) form the PH domain. Composition is skewed to polar residues over residues 645-660 (SFSVNSCQQSHPSRTS) and 688-698 (RASTSSPTIPQ). The tract at residues 645-763 (SFSVNSCQQS…SPMAPAKNDL (119 aa)) is disordered. The span at 708–729 (PAPPPVASVMRMPPPVTPPKPC) shows a compositional bias: pro residues.

Belongs to the MRL family. As to quaternary structure, may interact (via Ras-associating and PH domains) with ced-10 (GTP-bound form).

It localises to the perikaryon. Its function is as follows. Required cell non-autonomously for proper development of the excretory canals and for the long-range anterior-posterior migrations of embryonic neurons CAN, ALM and HSN. Plays a role, probably downstream of ced-10/rac1, in orientating axonal growth of HSN and AVM neurons in response to guidance cues such as slt-1. May regulate growth cone polarization by promoting asymmetric F-actin assembly. May be involved in signal transduction during cell migration. This chain is Abnormal cell migration protein 10, found in Caenorhabditis elegans.